We begin with the raw amino-acid sequence, 451 residues long: Glycosyltransferase-like At2g41451 (451 aa).

Residues 1-23 (MASSDSSYSRKFLLITFLPLSLA) form the signal peptide. N36, N137, N168, N441, and N444 each carry an N-linked (GlcNAc...) asparagine glycan. Residues 109–345 (QTLPWIFYHK…TYSKFSDLTS (237 aa)) enclose the GT92 domain.

It belongs to the glycosyltransferase 92 family.

Its subcellular location is the secreted. The protein localises to the cell wall. It localises to the cytoplasm. The protein resides in the cell membrane. Involved in the coordination between cell elongation and cellulose synthesis by promoting the expression of genes involved in cell elongation and cellulose synthesis. Acts as a regulator of plasmodesmatal permeability. Maybe a glycosyltransferase. This chain is Glycosyltransferase-like At2g41451, found in Arabidopsis thaliana (Mouse-ear cress).